Here is a 148-residue protein sequence, read N- to C-terminus: Small ribosomal subunit protein bS6 (148 aa).

Residues 96–148 (HEEGQSAMLTRRDDRRERDGDDRPRRREGGFDRGDRGDRGPRRPRDTEAGEGA) form a disordered region.

This sequence belongs to the bacterial ribosomal protein bS6 family.

Its function is as follows. Binds together with bS18 to 16S ribosomal RNA. In Brucella canis (strain ATCC 23365 / NCTC 10854 / RM-666), this protein is Small ribosomal subunit protein bS6.